A 358-amino-acid polypeptide reads, in one-letter code: Nicotinate-nucleotide--dimethylbenzimidazole phosphoribosyltransferase (358 aa).

The active-site Proton acceptor is Glu313.

The protein belongs to the CobT family.

The catalysed reaction is 5,6-dimethylbenzimidazole + nicotinate beta-D-ribonucleotide = alpha-ribazole 5'-phosphate + nicotinate + H(+). It functions in the pathway nucleoside biosynthesis; alpha-ribazole biosynthesis; alpha-ribazole from 5,6-dimethylbenzimidazole: step 1/2. Functionally, catalyzes the synthesis of alpha-ribazole-5'-phosphate from nicotinate mononucleotide (NAMN) and 5,6-dimethylbenzimidazole (DMB). This Corynebacterium glutamicum (strain R) protein is Nicotinate-nucleotide--dimethylbenzimidazole phosphoribosyltransferase.